The following is a 501-amino-acid chain: Cytochrome P450 7A1 (501 aa).

Residues 4–24 (ISLLGGIVTAVCCCLWLLLGM) traverse the membrane as a helical segment. A heme-binding site is contributed by C441.

This sequence belongs to the cytochrome P450 family. Heme serves as cofactor.

It is found in the endoplasmic reticulum membrane. Its subcellular location is the microsome membrane. It carries out the reaction cholesterol + reduced [NADPH--hemoprotein reductase] + O2 = 7alpha-hydroxycholesterol + oxidized [NADPH--hemoprotein reductase] + H2O + H(+). The catalysed reaction is 4beta-hydroxycholesterol + reduced [NADPH--hemoprotein reductase] + O2 = 4beta,7alpha-dihydroxycholesterol + oxidized [NADPH--hemoprotein reductase] + H2O + H(+). The enzyme catalyses lathosterol + reduced [NADPH--hemoprotein reductase] + O2 = 7alpha,8alpha-epoxy-5alpha-cholestan-3beta-ol + oxidized [NADPH--hemoprotein reductase] + H2O + H(+). It catalyses the reaction lathosterol + reduced [NADPH--hemoprotein reductase] + O2 = 5alpha-cholestan-7-oxo-3beta-ol + oxidized [NADPH--hemoprotein reductase] + H2O + H(+). It carries out the reaction 7-dehydrocholesterol + reduced [NADPH--hemoprotein reductase] + O2 = 7-oxocholesterol + oxidized [NADPH--hemoprotein reductase] + H2O + H(+). The catalysed reaction is (24S)-hydroxycholesterol + reduced [NADPH--hemoprotein reductase] + O2 = (24S)-7alpha-dihydroxycholesterol + oxidized [NADPH--hemoprotein reductase] + H2O + H(+). The enzyme catalyses (24R)-hydroxycholesterol + reduced [NADPH--hemoprotein reductase] + O2 = (24R)-7alpha-dihydroxycholesterol + oxidized [NADPH--hemoprotein reductase] + H2O + H(+). The protein operates within lipid metabolism; bile acid biosynthesis. Its pathway is steroid metabolism; cholesterol degradation. Functionally, a cytochrome P450 monooxygenase involved in the metabolism of endogenous cholesterol and its oxygenated derivatives (oxysterols). Mechanistically, uses molecular oxygen inserting one oxygen atom into a substrate, and reducing the second into a water molecule, with two electrons provided by NADPH via cytochrome P450 reductase (CPR; NADPH-ferrihemoprotein reductase). Functions as a critical regulatory enzyme of bile acid biosynthesis and cholesterol homeostasis. Catalyzes the hydroxylation of carbon hydrogen bond at 7-alpha position of cholesterol, a rate-limiting step in cholesterol catabolism and bile acid biosynthesis. 7-alpha hydroxylates several oxysterols, including 4beta-hydroxycholesterol and 24-hydroxycholesterol. Catalyzes the oxidation of the 7,8 double bond of 7-dehydrocholesterol and lathosterol with direct and predominant formation of the 7-keto derivatives. The chain is Cytochrome P450 7A1 (CYP7A1) from Sus scrofa (Pig).